Reading from the N-terminus, the 306-residue chain is Agmatinase (306 aa).

Mn(2+) is bound by residues His-126, Asp-149, His-151, Asp-153, Asp-230, and Asp-232.

The protein belongs to the arginase family. Agmatinase subfamily. The cofactor is Mn(2+).

It carries out the reaction agmatine + H2O = urea + putrescine. Its pathway is amine and polyamine biosynthesis; putrescine biosynthesis via agmatine pathway; putrescine from agmatine: step 1/1. In terms of biological role, catalyzes the formation of putrescine from agmatine. In Enterobacter sp. (strain 638), this protein is Agmatinase.